The following is a 205-amino-acid chain: Large ribosomal subunit protein uL18 (205 aa).

It belongs to the universal ribosomal protein uL18 family. Part of the 50S ribosomal subunit. Contacts the 5S and 23S rRNAs.

In terms of biological role, this is one of the proteins that bind and probably mediate the attachment of the 5S RNA into the large ribosomal subunit, where it forms part of the central protuberance. In Pyrobaculum arsenaticum (strain DSM 13514 / JCM 11321 / PZ6), this protein is Large ribosomal subunit protein uL18.